The primary structure comprises 219 residues: Large ribosomal subunit protein uL3 (219 aa).

Residues 113 to 142 (TTKGHGYQGNIHKDNQSRGPMAHGSRYHRR) are disordered.

The protein belongs to the universal ribosomal protein uL3 family. In terms of assembly, part of the 50S ribosomal subunit. Forms a cluster with proteins L14 and L19.

In terms of biological role, one of the primary rRNA binding proteins, it binds directly near the 3'-end of the 23S rRNA, where it nucleates assembly of the 50S subunit. This Limosilactobacillus reuteri (strain DSM 20016) (Lactobacillus reuteri) protein is Large ribosomal subunit protein uL3.